The sequence spans 232 residues: Platelet-activating factor acetylhydrolase IB subunit alpha1 (232 aa).

At S2 the chain carries N-acetylserine. S2 is modified (phosphoserine). Catalysis depends on residues S47, D192, and H195.

The protein belongs to the 'GDSL' lipolytic enzyme family. Platelet-activating factor acetylhydrolase IB beta/gamma subunits subfamily. Forms a catalytic dimer which is either homodimer (alpha1/alpha1 homodimer) or heterodimer with PAFAH1B2 (alpha1/alpha2 heterodimer). Component of the cytosolic (PAF-AH (I)) heterotetrameric enzyme, which is composed of PAFAH1B1 (beta), PAFAH1B2 (alpha2) and PAFAH1B3 (alpha1) subunits. The catalytic activity of the enzyme resides in the alpha1 (PAFAH1B3) and alpha2 (PAFAH1B2) subunits, whereas the beta subunit (PAFAH1B1) has regulatory activity. Trimer formation is not essential for the catalytic activity. Interacts with VLDLR; this interaction may modulate the Reelin pathway.

It localises to the cytoplasm. It catalyses the reaction a 1-O-alkyl-2-acetyl-sn-glycero-3-phosphocholine + H2O = a 1-O-alkyl-sn-glycero-3-phosphocholine + acetate + H(+). It carries out the reaction 1-O-hexadecyl-2-acetyl-sn-glycero-3-phosphocholine + H2O = 1-O-hexadecyl-sn-glycero-3-phosphocholine + acetate + H(+). The catalysed reaction is 1-O-hexadecyl-2-acetyl-sn-glycero-3-phosphate + H2O = 1-O-hexadecyl-sn-glycero-3-phosphate + acetate + H(+). Beta subunit (PAFAH1B1) inhibits the acetylhydrolase activity of the alpha1/alpha1 catalytic homodimer. Alpha1 catalytic subunit of the cytosolic type I platelet-activating factor (PAF) acetylhydrolase (PAF-AH (I)) heterotetrameric enzyme that catalyzes the hydrolyze of the acetyl group at the sn-2 position of PAF and its analogs and modulates the action of PAF. The activity and substrate specificity of PAF-AH (I) are affected by its subunit composition. Both alpha1/alpha1 homodimer (PAFAH1B3/PAFAH1B3 homodimer) and alpha1/alpha2 heterodimer(PAFAH1B3/PAFAH1B2 heterodimer) hydrolyze 1-O-alkyl-2-acetyl-sn-glycero-3-phosphoric acid (AAGPA) more efficiently than PAF, but they have little hydrolytic activity towards 1-O-alkyl-2-acetyl-sn-glycero-3-phosphorylethanolamine (AAGPE). Plays an important role during the development of brain. In Bos taurus (Bovine), this protein is Platelet-activating factor acetylhydrolase IB subunit alpha1.